The following is a 225-amino-acid chain: Octanoyltransferase (225 aa).

The BPL/LPL catalytic domain occupies glutamate 31–aspartate 214. Substrate contacts are provided by residues arginine 70–histidine 77, serine 137–glycine 139, and glycine 150–alanine 152. Catalysis depends on cysteine 168, which acts as the Acyl-thioester intermediate.

This sequence belongs to the LipB family.

It is found in the cytoplasm. The catalysed reaction is octanoyl-[ACP] + L-lysyl-[protein] = N(6)-octanoyl-L-lysyl-[protein] + holo-[ACP] + H(+). It functions in the pathway protein modification; protein lipoylation via endogenous pathway; protein N(6)-(lipoyl)lysine from octanoyl-[acyl-carrier-protein]: step 1/2. Its function is as follows. Catalyzes the transfer of endogenously produced octanoic acid from octanoyl-acyl-carrier-protein onto the lipoyl domains of lipoate-dependent enzymes. Lipoyl-ACP can also act as a substrate although octanoyl-ACP is likely to be the physiological substrate. The protein is Octanoyltransferase of Aliivibrio fischeri (strain ATCC 700601 / ES114) (Vibrio fischeri).